A 131-amino-acid chain; its full sequence is Translation initiation factor 5A (131 aa).

A Hypusine modification is found at Lys36.

This sequence belongs to the eIF-5A family.

It is found in the cytoplasm. In terms of biological role, functions by promoting the formation of the first peptide bond. The polypeptide is Translation initiation factor 5A (Sulfurisphaera tokodaii (strain DSM 16993 / JCM 10545 / NBRC 100140 / 7) (Sulfolobus tokodaii)).